A 197-amino-acid polypeptide reads, in one-letter code: Phosphoheptose isomerase (197 aa).

Residues 36–197 (MVNALLNEGK…IDSQLFGSEE (162 aa)) form the SIS domain. 51-53 (NGG) lines the substrate pocket. Zn(2+) is bound by residues His-60 and Glu-64. Residues Glu-64, 93 to 94 (ND), 119 to 121 (STS), Ser-124, and Gln-174 contribute to the substrate site. Gln-174 and His-182 together coordinate Zn(2+).

The protein belongs to the SIS family. GmhA subfamily. Homotetramer. Requires Zn(2+) as cofactor.

The protein resides in the cytoplasm. It catalyses the reaction 2 D-sedoheptulose 7-phosphate = D-glycero-alpha-D-manno-heptose 7-phosphate + D-glycero-beta-D-manno-heptose 7-phosphate. It functions in the pathway carbohydrate biosynthesis; D-glycero-D-manno-heptose 7-phosphate biosynthesis; D-glycero-alpha-D-manno-heptose 7-phosphate and D-glycero-beta-D-manno-heptose 7-phosphate from sedoheptulose 7-phosphate: step 1/1. Its function is as follows. Catalyzes the isomerization of sedoheptulose 7-phosphate in D-glycero-D-manno-heptose 7-phosphate. This Pseudomonas fluorescens (strain Pf0-1) protein is Phosphoheptose isomerase.